The sequence spans 425 residues: Diacetylchitobiose binding protein DasA (425 aa).

Positions 1-20 (MKRKLIAAIGIAGMMVSIAA) are cleaved as a signal peptide. C21 carries the N-palmitoyl cysteine lipid modification. C21 carries the S-diacylglycerol cysteine lipid modification.

It belongs to the bacterial solute-binding protein 1 family. The complex is composed of two ATP-binding proteins (MsiK), two transmembrane proteins (DasB and DasC) and a solute-binding protein (DasA).

It localises to the cell membrane. In terms of biological role, part of the ABC transporter complex DasABC-MsiK involved in N,N'-diacetylchitobiose ((GlcNAc)2) uptake. Binds specifically to (GlcNAc)2. Can also bind to GlcNAc, (GlcNAc)3, (GlcNAc)4 and (GlcNAc)5, but it exhibits the highest affinity for (GlcNAc)2. Involved in the control of morphological differentiation. In Streptomyces coelicolor (strain ATCC BAA-471 / A3(2) / M145), this protein is Diacetylchitobiose binding protein DasA.